Here is a 249-residue protein sequence, read N- to C-terminus: dTDP-4-amino-2,3,4,6-tetradeoxy-D-glucose N,N-dimethyltransferase (249 aa).

Arg30 serves as a coordination point for substrate. S-adenosyl-L-methionine-binding positions include Ala59, Glu80, and 102 to 103 (DI). Residues Thr165, 178 to 182 (RLSHS), and Arg241 contribute to the substrate site.

Belongs to the methyltransferase TylM1/DesVI family. In terms of assembly, homodimer. Mg(2+) is required as a cofactor.

It catalyses the reaction dTDP-4-amino-2,3,4,6-tetradeoxy-alpha-D-erythro-hexopyranose + 2 S-adenosyl-L-methionine = dTDP-alpha-D-forosamine + 2 S-adenosyl-L-homocysteine + 2 H(+). Involved in the biosynthesis of forosamine ((4-dimethylamino)-2,3,4,6-tetradeoxy-alpha-D-threo-hexopyranose), a highly deoxygenated sugar component of several bioactive natural products such as the insecticidal spinosyns A and D. Catalyzes the dimethylation of the C-4 amino group from dTDP-4-amino-2,3,4,6-tetradeoxy-alpha-D-glucose to yield dTDP-D-forosamine. In Saccharopolyspora spinosa, this protein is dTDP-4-amino-2,3,4,6-tetradeoxy-D-glucose N,N-dimethyltransferase.